A 396-amino-acid polypeptide reads, in one-letter code: Aspartate aminotransferase (396 aa).

The L-aspartate site is built by Gly-34, Trp-130, and Asn-183. An N6-(pyridoxal phosphate)lysine modification is found at Lys-246. Arg-374 lines the L-aspartate pocket.

It belongs to the class-I pyridoxal-phosphate-dependent aminotransferase family. Homodimer. Pyridoxal 5'-phosphate serves as cofactor.

It localises to the cytoplasm. It carries out the reaction L-aspartate + 2-oxoglutarate = oxaloacetate + L-glutamate. In Salmonella typhi, this protein is Aspartate aminotransferase (aspC).